The primary structure comprises 212 residues: MQNVDNTAVIDAANALPGRLTSIPVSPLHAVHGHSMTYIPEGMDLAFFAMGCFWGAERLFWQQPGVYSTAAGYSGGHTPNPTYHEVCSGRTGHAEVVRVVFDPAVISYQQLLQIFWENHDPAQGMRQGGDVGTQYRSAIYVLTPEQEEQAHKSRERFQQAMEKAGDQRVITSEITVALPFYYAEDDHQQYLHKNPHGYCGLGGIGVCLPPNV.

Residue Cys-52 is part of the active site.

Belongs to the MsrA Met sulfoxide reductase family.

It catalyses the reaction L-methionyl-[protein] + [thioredoxin]-disulfide + H2O = L-methionyl-(S)-S-oxide-[protein] + [thioredoxin]-dithiol. The enzyme catalyses [thioredoxin]-disulfide + L-methionine + H2O = L-methionine (S)-S-oxide + [thioredoxin]-dithiol. Functionally, has an important function as a repair enzyme for proteins that have been inactivated by oxidation. Catalyzes the reversible oxidation-reduction of methionine sulfoxide in proteins to methionine. The chain is Peptide methionine sulfoxide reductase MsrA from Yersinia pseudotuberculosis serotype O:1b (strain IP 31758).